Reading from the N-terminus, the 122-residue chain is Small ribosomal subunit protein uS13 (122 aa).

The disordered stretch occupies residues 98–122; sequence VRGQRTKTNARTRKGKRKTVGAKAK.

This sequence belongs to the universal ribosomal protein uS13 family. In terms of assembly, part of the 30S ribosomal subunit. Forms a loose heterodimer with protein S19. Forms two bridges to the 50S subunit in the 70S ribosome.

In terms of biological role, located at the top of the head of the 30S subunit, it contacts several helices of the 16S rRNA. In the 70S ribosome it contacts the 23S rRNA (bridge B1a) and protein L5 of the 50S subunit (bridge B1b), connecting the 2 subunits; these bridges are implicated in subunit movement. Contacts the tRNAs in the A and P-sites. This chain is Small ribosomal subunit protein uS13, found in Nautilia profundicola (strain ATCC BAA-1463 / DSM 18972 / AmH).